The chain runs to 354 residues: Alternative oxidase, mitochondrial (354 aa).

Residues Met1–Gln64 constitute a mitochondrion transit peptide. A helical membrane pass occupies residues Phe153–Leu173. Fe cation is bound by residues Glu157, Glu196, and His199. Residues Leu215–Ser235 traverse the membrane as a helical segment. Fe cation is bound by residues Glu247, Glu302, and His305. The segment at Lys333–Val354 is disordered. Residues His335–Lys344 show a composition bias toward basic residues.

The protein belongs to the alternative oxidase family. Fe cation serves as cofactor.

The protein localises to the mitochondrion inner membrane. Its function is as follows. Catalyzes cyanide-resistant oxygen consumption. May increase respiration when the cytochrome respiratory pathway is restricted, or in response to low temperatures. This is Alternative oxidase, mitochondrial (alxA) from Emericella nidulans (strain FGSC A4 / ATCC 38163 / CBS 112.46 / NRRL 194 / M139) (Aspergillus nidulans).